Reading from the N-terminus, the 556-residue chain is Membrane protein insertase YidC (556 aa).

A run of 5 helical transmembrane segments spans residues 6–26, 332–352, 358–378, 428–448, and 501–521; these read IVLY…WQID, LDLT…FSLM, VVGN…LAFY, LGGC…YWVL, and VMMF…SGLV.

The protein belongs to the OXA1/ALB3/YidC family. Type 1 subfamily. Interacts with the Sec translocase complex via SecD. Specifically interacts with transmembrane segments of nascent integral membrane proteins during membrane integration.

The protein resides in the cell inner membrane. Required for the insertion and/or proper folding and/or complex formation of integral membrane proteins into the membrane. Involved in integration of membrane proteins that insert both dependently and independently of the Sec translocase complex, as well as at least some lipoproteins. Aids folding of multispanning membrane proteins. The protein is Membrane protein insertase YidC of Legionella pneumophila (strain Lens).